A 2290-amino-acid chain; its full sequence is Protein Ycf2 (2290 aa).

1644–1651 (GSIGTGRS) is an ATP binding site.

It belongs to the Ycf2 family.

Its subcellular location is the plastid. It localises to the chloroplast stroma. In terms of biological role, probable ATPase of unknown function. Its presence in a non-photosynthetic plant (Epifagus virginiana) and experiments in tobacco indicate that it has an essential function which is probably not related to photosynthesis. This chain is Protein Ycf2, found in Nasturtium officinale (Watercress).